The chain runs to 118 residues: Large ribosomal subunit protein bL20 (118 aa).

The protein belongs to the bacterial ribosomal protein bL20 family.

Functionally, binds directly to 23S ribosomal RNA and is necessary for the in vitro assembly process of the 50S ribosomal subunit. It is not involved in the protein synthesizing functions of that subunit. This Clostridioides difficile (strain 630) (Peptoclostridium difficile) protein is Large ribosomal subunit protein bL20.